A 31-amino-acid polypeptide reads, in one-letter code: Cytochrome b6-f complex subunit 6 (31 aa).

Residues 3-23 (IAIDYFLLVGFCFAFTSGLYL) form a helical membrane-spanning segment.

The protein belongs to the PetL family. In terms of assembly, the 4 large subunits of the cytochrome b6-f complex are cytochrome b6, subunit IV (17 kDa polypeptide, PetD), cytochrome f and the Rieske protein, while the 4 small subunits are PetG, PetL, PetM and PetN. The complex functions as a dimer.

The protein localises to the plastid. It localises to the chloroplast thylakoid membrane. Its function is as follows. Component of the cytochrome b6-f complex, which mediates electron transfer between photosystem II (PSII) and photosystem I (PSI), cyclic electron flow around PSI, and state transitions. PetL is important for photoautotrophic growth as well as for electron transfer efficiency and stability of the cytochrome b6-f complex. This is Cytochrome b6-f complex subunit 6 from Trieres chinensis (Marine centric diatom).